Reading from the N-terminus, the 150-residue chain is MQIILLDKVVNLGNLGDVVKVKDGYARNFLIPFGRARRATAAAIKEFEVKRAELEKAAAAKLAEMQVQGEKLGGTTVKLTQKAGVDGRLFGSVTNADIAQEVTKQGFAVSKSQIRLPNGPIKTVGDHAINIALHTDVVVDITVTVYGETA.

It belongs to the bacterial ribosomal protein bL9 family.

Binds to the 23S rRNA. The protein is Large ribosomal subunit protein bL9 of Polaromonas naphthalenivorans (strain CJ2).